A 73-amino-acid chain; its full sequence is Long neurotoxin 2 (73 aa).

Cystine bridges form between C3–C21, C14–C42, C27–C31, C46–C57, and C58–C63.

Belongs to the three-finger toxin family. Long-chain subfamily. Type II alpha-neurotoxin sub-subfamily. In terms of tissue distribution, expressed by the venom gland.

It localises to the secreted. Functionally, binds with high affinity to muscular (alpha-1/CHRNA1) and neuronal (alpha-7/CHRNA7) nicotinic acetylcholine receptor (nAChR) and inhibits acetylcholine from binding to the receptor, thereby impairing neuromuscular and neuronal transmission. This chain is Long neurotoxin 2, found in Ophiophagus hannah (King cobra).